Here is a 459-residue protein sequence, read N- to C-terminus: Putrescine aminotransferase (459 aa).

Pyridoxal 5'-phosphate contacts are provided by residues 150–151 (GT) and glutamine 274. An N6-(pyridoxal phosphate)lysine modification is found at lysine 300. Residue threonine 332 participates in pyridoxal 5'-phosphate binding.

It belongs to the class-III pyridoxal-phosphate-dependent aminotransferase family. Putrescine aminotransferase subfamily. Requires pyridoxal 5'-phosphate as cofactor.

It carries out the reaction an alkane-alpha,omega-diamine + 2-oxoglutarate = an omega-aminoaldehyde + L-glutamate. The enzyme catalyses putrescine + 2-oxoglutarate = 1-pyrroline + L-glutamate + H2O. The catalysed reaction is cadaverine + 2-oxoglutarate = 5-aminopentanal + L-glutamate. Its pathway is amine and polyamine degradation; putrescine degradation; 4-aminobutanal from putrescine (transaminase route): step 1/1. Functionally, catalyzes the aminotransferase reaction from putrescine to 2-oxoglutarate, leading to glutamate and 4-aminobutanal, which spontaneously cyclizes to form 1-pyrroline. This is the first step in one of two pathways for putrescine degradation, where putrescine is converted into 4-aminobutanoate (gamma-aminobutyrate or GABA) via 4-aminobutanal. Also functions as a cadaverine transaminase in a a L-lysine degradation pathway to succinate that proceeds via cadaverine, glutarate and L-2-hydroxyglutarate. This is Putrescine aminotransferase from Salmonella choleraesuis (strain SC-B67).